Consider the following 180-residue polypeptide: Fanconi anemia core complex-associated protein 20 (180 aa).

The span at 1–17 (MEAARRPRLGLSRRRPR) shows a compositional bias: basic residues. 2 disordered regions span residues 1–28 (MEAARRPRLGLSRRRPRPAGGPSGGRPW) and 106–135 (GAGGHLESPARSLPQRPAPDPCRAPRVEQQ). Ser-113 and Ser-137 each carry phosphoserine. The UBZ2-type zinc finger occupies 144–180 (LRSCPMCQKEFAPRLTQLDVDSHLAQCLAESTEDVTW). Zn(2+) is bound by residues Cys-147, Cys-150, His-166, and Cys-170.

In terms of assembly, component of the Fanconi anemia (FA) complex. Interacts with FANCA; interaction is direct. Interacts with REV1. Reported to bind monoubiquitinated REV1; however it binds better to non-ubiquitinated REV1.

It localises to the nucleus. The protein localises to the chromosome. Functionally, component of the Fanconi anemia (FA) complex required to recruit the FA complex to DNA interstrand cross-links (ICLs) and promote ICLs repair. Following DNA damage recognizes and binds 'Lys-63'-linked ubiquitin generated by RNF8 at ICLs and recruits other components of the FA complex. Promotes translesion synthesis via interaction with REV1. The protein is Fanconi anemia core complex-associated protein 20 of Homo sapiens (Human).